Reading from the N-terminus, the 139-residue chain is GATA transcription factor 16 (139 aa).

Residues 32–86 (NDKKKTCADCGTSKTPLWRGGPVGPKSLCNACGIRNRKKRRGGTEDNKKLKKSSS) form a GATA-type zinc finger. The tract at residues 67-98 (NRKKRRGGTEDNKKLKKSSSGGGNRKFGESLK) is disordered.

It belongs to the type IV zinc-finger family. Class B subfamily.

It is found in the nucleus. Transcriptional regulator that specifically binds 5'-GATA-3' or 5'-GAT-3' motifs within gene promoters. This is GATA transcription factor 16 (GATA16) from Arabidopsis thaliana (Mouse-ear cress).